A 228-amino-acid polypeptide reads, in one-letter code: Outer membrane protein assembly factor BamE (228 aa).

The first 29 residues, 1-29 (MNPILKGVYSPARLGVVALTLFGILGVTG), serve as a signal peptide directing secretion. Residue Cys-30 is the site of N-palmitoyl cysteine attachment. The S-diacylglycerol cysteine moiety is linked to residue Cys-30. The interval 197–228 (DFFGSSKKDPDPQSPQLGPGTLNDVPKPADSK) is disordered.

This sequence belongs to the BamE family. In terms of assembly, part of the Bam complex.

The protein localises to the cell outer membrane. Part of the outer membrane protein assembly complex, which is involved in assembly and insertion of beta-barrel proteins into the outer membrane. The sequence is that of Outer membrane protein assembly factor BamE from Polynucleobacter necessarius subsp. necessarius (strain STIR1).